A 583-amino-acid polypeptide reads, in one-letter code: Secretogranin-2b (583 aa).

Positions Met-1–Gly-28 are cleaved as a signal peptide. 2 disordered regions span residues Ala-123–Val-159 and Val-526–Met-583. Residues Ala-534 to Gly-546 are compositionally biased toward basic and acidic residues.

It belongs to the chromogranin/secretogranin protein family.

Its subcellular location is the secreted. Its function is as follows. Neuroendocrine protein of the granin family that regulates the biogenesis of secretory granules. Required for neurovascular modeling of the hindbrain. Acts in a non-cell autonomous manner and is required for migration and proliferation of central artery endothelial cells. Required for normal courting behavior and spawning. The protein is Secretogranin-2b of Danio rerio (Zebrafish).